A 268-amino-acid polypeptide reads, in one-letter code: Myeloid leukemia factor 1 (268 aa).

Ser-6, Ser-8, and Ser-32 each carry phosphoserine. The interval 50-125 (RVHNRRGHND…IGDEPPKVFQ (76 aa)) is interaction with COPS3. The tract at residues 208–268 (PGRHNLENTR…KGSSVKSNKK (61 aa)) is disordered. 2 stretches are compositionally biased toward basic and acidic residues: residues 226-237 (PGSRELKRREKP) and 244-257 (EHGRRSDVLGDKLH).

This sequence belongs to the MLF family. As to quaternary structure, interacts with CENPU. Also interacts with NRBP1/MADM, YWHAZ/14-3-3-zeta and HNRPUL2/MANP. NRBP1 recruits a serine kinase which phosphorylates both itself and MLF1. Phosphorylated MLF1 then binds to YWHAZ and is retained in the cytoplasm. Retained in the nucleus by binding to HNRPUL2. Binds to COPS3/CSN3 which is required for suppression of COP1 and activation of p53. Post-translationally, phosphorylation is required for binding to YWHAZ.

It localises to the cytoplasm. It is found in the nucleus. Its subcellular location is the cell projection. The protein resides in the cilium. The protein localises to the cytoskeleton. It localises to the cilium basal body. Involved in lineage commitment of primary hemopoietic progenitors by restricting erythroid formation and enhancing myeloid formation. Interferes with erythropoietin-induced erythroid terminal differentiation by preventing cells from exiting the cell cycle through suppression of CDKN1B/p27Kip1 levels. Suppresses COP1 activity via CSN3 which activates p53 and induces cell cycle arrest. Binds DNA and affects the expression of a number of genes so may function as a transcription factor in the nucleus. The polypeptide is Myeloid leukemia factor 1 (MLF1) (Pongo abelii (Sumatran orangutan)).